The following is a 206-amino-acid chain: MVLGKVKKIPVEEPRLTKEQKIERDLLIKKKVSKLANSIRIPPAIYQFRTVLSEHDTKKFVELFMKYRPENKQEKRIRLQSEDPKKGPKPILVKFGLKHVTNLIETKKAKLVLISASVDPIEVVIFLPTLCRKMGVSYAIVENSTLLGKLVNLKTTSCVCLCDVRPEDEGSFKEMLRTADAIFLDNYETHLSTWGGLPQKEADEKQ.

This sequence belongs to the eukaryotic ribosomal protein eL8 family. In terms of assembly, component of the large ribosomal subunit.

Its subcellular location is the cytoplasm. The sequence is that of Large ribosomal subunit protein eL8 (RPL7A) from Encephalitozoon cuniculi (strain GB-M1) (Microsporidian parasite).